The chain runs to 154 residues: Toxin YhaV (154 aa).

As to quaternary structure, homohexamer; forms a complex with PrlF (SohA) with stoichiometry PrlF(2)-YhaV(4), possibly as a YhaV(2)-PrlF(2)-YhaV(2) complex like the MazFE complex. May dimerize in solution.

Its function is as follows. Toxic component of a type II toxin-antitoxin (TA) system. Has RNase activity in vitro. Acts as a transcription factor. The YhaV/PrlF complex binds the prlF-yhaV operon, probably negatively regulating its expression. The polypeptide is Toxin YhaV (yhaV) (Escherichia coli O6:H1 (strain CFT073 / ATCC 700928 / UPEC)).